The chain runs to 78 residues: Exodeoxyribonuclease 7 small subunit (78 aa).

The protein belongs to the XseB family. Heterooligomer composed of large and small subunits.

It is found in the cytoplasm. It carries out the reaction Exonucleolytic cleavage in either 5'- to 3'- or 3'- to 5'-direction to yield nucleoside 5'-phosphates.. Bidirectionally degrades single-stranded DNA into large acid-insoluble oligonucleotides, which are then degraded further into small acid-soluble oligonucleotides. The chain is Exodeoxyribonuclease 7 small subunit from Idiomarina loihiensis (strain ATCC BAA-735 / DSM 15497 / L2-TR).